The sequence spans 270 residues: uncharacterized protein (270 aa).

A signal peptide spans 1–23 (MFNFITFILFAVVCISYCHKSRG). Asn-246 and Asn-252 each carry an N-linked (GlcNAc...) asparagine glycan.

Its subcellular location is the secreted. This is an uncharacterized protein from Caenorhabditis elegans.